The chain runs to 670 residues: DNA ligase (670 aa).

Residues 32–36 (DAEYD), 81–82 (SL), and E110 contribute to the NAD(+) site. The N6-AMP-lysine intermediate role is filled by K112. NAD(+) is bound by residues R133, E170, K289, and K313. 4 residues coordinate Zn(2+): C407, C410, C425, and C431. The region spanning 590-670 (ESQLSLKGQT…ALMDLLNAAN (81 aa)) is the BRCT domain.

This sequence belongs to the NAD-dependent DNA ligase family. LigA subfamily. Mg(2+) is required as a cofactor. Requires Mn(2+) as cofactor.

The catalysed reaction is NAD(+) + (deoxyribonucleotide)n-3'-hydroxyl + 5'-phospho-(deoxyribonucleotide)m = (deoxyribonucleotide)n+m + AMP + beta-nicotinamide D-nucleotide.. Its function is as follows. DNA ligase that catalyzes the formation of phosphodiester linkages between 5'-phosphoryl and 3'-hydroxyl groups in double-stranded DNA using NAD as a coenzyme and as the energy source for the reaction. It is essential for DNA replication and repair of damaged DNA. The protein is DNA ligase of Shewanella frigidimarina (strain NCIMB 400).